The chain runs to 527 residues: Peptide chain release factor 3 (527 aa).

The tr-type G domain occupies 9-278 (NKRRTFAIIS…GLTQWAPKPQ (270 aa)). Residues 18 to 25 (SHPDAGKT), 86 to 90 (DTPGH), and 140 to 143 (NKLD) contribute to the GTP site.

This sequence belongs to the TRAFAC class translation factor GTPase superfamily. Classic translation factor GTPase family. PrfC subfamily.

Its subcellular location is the cytoplasm. Functionally, increases the formation of ribosomal termination complexes and stimulates activities of RF-1 and RF-2. It binds guanine nucleotides and has strong preference for UGA stop codons. It may interact directly with the ribosome. The stimulation of RF-1 and RF-2 is significantly reduced by GTP and GDP, but not by GMP. The chain is Peptide chain release factor 3 from Haemophilus influenzae (strain PittGG).